Reading from the N-terminus, the 418-residue chain is CCA-adding enzyme (418 aa).

ATP-binding residues include serine 54 and arginine 57. Serine 54 and arginine 57 together coordinate CTP. Mg(2+) is bound by residues aspartate 66, aspartate 68, and aspartate 118. ATP is bound by residues histidine 141, lysine 161, and tyrosine 170. Positions 141, 161, and 170 each coordinate CTP.

Belongs to the tRNA nucleotidyltransferase/poly(A) polymerase family. Archaeal CCA-adding enzyme subfamily. Homodimer. The cofactor is Mg(2+).

The enzyme catalyses a tRNA precursor + 2 CTP + ATP = a tRNA with a 3' CCA end + 3 diphosphate. The catalysed reaction is a tRNA with a 3' CCA end + 2 CTP + ATP = a tRNA with a 3' CCACCA end + 3 diphosphate. In terms of biological role, catalyzes the addition and repair of the essential 3'-terminal CCA sequence in tRNAs without using a nucleic acid template. Adds these three nucleotides in the order of C, C, and A to the tRNA nucleotide-73, using CTP and ATP as substrates and producing inorganic pyrophosphate. tRNA 3'-terminal CCA addition is required both for tRNA processing and repair. Also involved in tRNA surveillance by mediating tandem CCA addition to generate a CCACCA at the 3' terminus of unstable tRNAs. While stable tRNAs receive only 3'-terminal CCA, unstable tRNAs are marked with CCACCA and rapidly degraded. The protein is CCA-adding enzyme of Pyrobaculum islandicum (strain DSM 4184 / JCM 9189 / GEO3).